A 284-amino-acid polypeptide reads, in one-letter code: MFDPKSLDSGSRSILTMKNRLVSWAWALTLMYMLVSLILPIGALLQKSSQESVSEFVSIATAPVAMSAYAVTLSSALIAALLNGVFGLLIAWVLVRYEFPGRRLLDAAVDLPFALPTSVAGLTLATVYSDQGWIGTWLSSLNIQVAFTRLGVMLAMLFVSFPFVVRTLQPVLQDMERELEEAAWSLGASPFNTFLRVLCPPLMPAMMTGIALAFSRAVGEYGSVVIVSGNIPFQDLIAPVLIFQRLEQYDYSGATVIGTVVLLISLTLLLAINWIQASNRKFLG.

Transmembrane regions (helical) follow at residues 25-45 (AWAL…GALL), 75-95 (SALI…WVLV), 107-127 (AAVD…LATV), 145-165 (VAFT…PFVV), 194-214 (FLRV…ALAF), 223-243 (SVVI…VLIF), and 255-275 (TVIG…INWI). The 204-residue stretch at 69 to 272 (YAVTLSSALI…LISLTLLLAI (204 aa)) folds into the ABC transmembrane type-1 domain.

Belongs to the binding-protein-dependent transport system permease family. CysTW subfamily.

It localises to the plastid. The protein localises to the chloroplast membrane. Functionally, part of the ABC transporter complex cysAWTP (TC 3.A.1.6.1) involved in sulfate/thiosulfate import. Probably responsible for the translocation of the substrate across the membrane. In Nephroselmis olivacea (Green alga), this protein is Probable sulfate transport system permease protein cysT (cysT).